The following is a 451-amino-acid chain: Methylenetetrahydrofolate--tRNA-(uracil-5-)-methyltransferase TrmFO (451 aa).

Residue Gly-18–Gly-23 coordinates FAD.

It belongs to the MnmG family. TrmFO subfamily. Requires FAD as cofactor.

The protein localises to the cytoplasm. The catalysed reaction is uridine(54) in tRNA + (6R)-5,10-methylene-5,6,7,8-tetrahydrofolate + NADH + H(+) = 5-methyluridine(54) in tRNA + (6S)-5,6,7,8-tetrahydrofolate + NAD(+). It catalyses the reaction uridine(54) in tRNA + (6R)-5,10-methylene-5,6,7,8-tetrahydrofolate + NADPH + H(+) = 5-methyluridine(54) in tRNA + (6S)-5,6,7,8-tetrahydrofolate + NADP(+). Functionally, catalyzes the folate-dependent formation of 5-methyl-uridine at position 54 (M-5-U54) in all tRNAs. The sequence is that of Methylenetetrahydrofolate--tRNA-(uracil-5-)-methyltransferase TrmFO from Synechococcus sp. (strain JA-3-3Ab) (Cyanobacteria bacterium Yellowstone A-Prime).